The chain runs to 473 residues: Photosystem II CP43 reaction center protein (473 aa).

Positions 1-14 (MKILYSLRRFYHVE) are excised as a propeptide. Thr-15 carries the N-acetylthreonine modification. Residue Thr-15 is modified to Phosphothreonine. 5 helical membrane-spanning segments follow: residues 69–93 (LFEV…PHLA), 134–155 (LLGP…QDRN), 178–200 (KALY…RKIT), 255–275 (KPFA…LSYS), and 291–312 (WFNN…ASQA). Glu-367 is a binding site for [CaMn4O5] cluster. A helical membrane pass occupies residues 447 to 471 (RARAAAAGFEKGIDRDLEPVVYMTP).

The protein belongs to the PsbB/PsbC family. PsbC subfamily. PSII is composed of 1 copy each of membrane proteins PsbA, PsbB, PsbC, PsbD, PsbE, PsbF, PsbH, PsbI, PsbJ, PsbK, PsbL, PsbM, PsbT, PsbX, PsbY, PsbZ, Psb30/Ycf12, at least 3 peripheral proteins of the oxygen-evolving complex and a large number of cofactors. It forms dimeric complexes. The cofactor is Binds multiple chlorophylls and provides some of the ligands for the Ca-4Mn-5O cluster of the oxygen-evolving complex. It may also provide a ligand for a Cl- that is required for oxygen evolution. PSII binds additional chlorophylls, carotenoids and specific lipids.. Phosphorylated in both bundle sheath and mesophyll cells, phosphorylation increases when cells are grown under high rather than low light regimes (70 vs 900 umol photons/m-2/s).

Its subcellular location is the plastid. The protein resides in the chloroplast thylakoid membrane. Functionally, one of the components of the core complex of photosystem II (PSII). It binds chlorophyll and helps catalyze the primary light-induced photochemical processes of PSII. PSII is a light-driven water:plastoquinone oxidoreductase, using light energy to abstract electrons from H(2)O, generating O(2) and a proton gradient subsequently used for ATP formation. The sequence is that of Photosystem II CP43 reaction center protein from Zea mays (Maize).